The chain runs to 841 residues: Translation initiation factor IF-2 (841 aa).

The segment at 87-254 is disordered; sequence RKKKVFVQRS…KRNAHGFQSP (168 aa). The span at 96–135 shows a compositional bias: basic and acidic residues; it reads SPEEIEAERKREMDERRAVENAARQKAEEEAKRRAEEDAR. Over residues 136–175 the composition is skewed to low complexity; the sequence is SQPAASQSAPAAAEPVAAAEPVREAAPAAAPAPASAAPSA. Composition is skewed to basic and acidic residues over residues 176-217 and 225-234; these read DARK…EKAP and TTDEESDSFR. Residues 235 to 248 are compositionally biased toward basic residues; that stretch reads RGGRGKGKLKKRNA. The tr-type G domain maps to 341-510; it reads SRAPVVTVMG…LLQAEVLELK (170 aa). The segment at 350-357 is G1; the sequence is GHVDHGKT. A GTP-binding site is contributed by 350–357; it reads GHVDHGKT. Residues 375–379 are G2; sequence GITQH. Residues 396–399 are G3; the sequence is DTPG. Residues 396 to 400 and 450 to 453 each bind GTP; these read DTPGH and NKID. Residues 450–453 form a G4 region; sequence NKID. The G5 stretch occupies residues 486–488; the sequence is SAK.

This sequence belongs to the TRAFAC class translation factor GTPase superfamily. Classic translation factor GTPase family. IF-2 subfamily.

Its subcellular location is the cytoplasm. Its function is as follows. One of the essential components for the initiation of protein synthesis. Protects formylmethionyl-tRNA from spontaneous hydrolysis and promotes its binding to the 30S ribosomal subunits. Also involved in the hydrolysis of GTP during the formation of the 70S ribosomal complex. The chain is Translation initiation factor IF-2 from Pseudomonas syringae pv. syringae (strain B728a).